The sequence spans 309 residues: uncharacterized protein (309 aa).

A helical transmembrane segment spans residues 23 to 39 (RFNVAIIGGTGGLGRAI).

The protein belongs to the NmrA-type oxidoreductase family.

Its subcellular location is the membrane. This is an uncharacterized protein from Saccharomyces cerevisiae (strain ATCC 204508 / S288c) (Baker's yeast).